A 146-amino-acid chain; its full sequence is Hemoglobin subunit beta (146 aa).

An N-acetylvaline modification is found at V1. Residues 2-146 form the Globin domain; it reads HLTADEKTAV…VANALAHKYH (145 aa). At T12 the chain carries Phosphothreonine. A Phosphoserine modification is found at S44. K59 carries the N6-acetyllysine modification. Residue H63 coordinates heme b. Position 82 is an N6-acetyllysine (K82). H92 lines the heme b pocket. S-nitrosocysteine is present on C93. At K144 the chain carries N6-acetyllysine.

The protein belongs to the globin family. Heterotetramer of two alpha chains and two beta chains. In terms of tissue distribution, red blood cells.

Its function is as follows. Involved in oxygen transport from the lung to the various peripheral tissues. The polypeptide is Hemoglobin subunit beta (HBB) (Procyon lotor (Raccoon)).